The chain runs to 401 residues: Bifunctional sugar-1-phosphate nucleotidylyltransferase/acetyltransferase (401 aa).

The tract at residues 1–220 (MKAFILAAGS…KPWNIIDVNK (220 aa)) is nucleotidylyltransferase. Residues 8-13 (AGSGER), Gln73, and Gly79 each bind a ribonucleoside 5'-triphosphate. Residues Thr80, Tyr97, Gly131, Glu146, and Asn157 each contribute to the N-acetyl-alpha-D-glucosamine 1-phosphate site. The interval 236-401 (EDNVKIKGKV…DVGYGEFFKV (166 aa)) is acetyltransferase.

In the N-terminal section; belongs to the N-acetylglucosamine-1-phosphate uridyltransferase family. This sequence in the C-terminal section; belongs to the transferase hexapeptide repeat family. Homotrimer. It depends on Co(2+) as a cofactor. Mn(2+) is required as a cofactor.

The enzyme catalyses dTTP + alpha-D-glucose 1-phosphate + H(+) = dTDP-alpha-D-glucose + diphosphate. It carries out the reaction alpha-D-glucose 1-phosphate + UTP + H(+) = UDP-alpha-D-glucose + diphosphate. It catalyses the reaction N-acetyl-alpha-D-galactosamine 1-phosphate + UTP + H(+) = UDP-N-acetyl-alpha-D-galactosamine + diphosphate. The catalysed reaction is N-acetyl-alpha-D-glucosamine 1-phosphate + UTP + H(+) = UDP-N-acetyl-alpha-D-glucosamine + diphosphate. The enzyme catalyses alpha-D-galactosamine 1-phosphate + acetyl-CoA = N-acetyl-alpha-D-galactosamine 1-phosphate + CoA + H(+). It carries out the reaction alpha-D-glucosamine 1-phosphate + acetyl-CoA = N-acetyl-alpha-D-glucosamine 1-phosphate + CoA + H(+). Its pathway is nucleotide-sugar biosynthesis; UDP-N-acetyl-alpha-D-glucosamine biosynthesis; N-acetyl-alpha-D-glucosamine 1-phosphate from alpha-D-glucosamine 6-phosphate (route II): step 2/2. It functions in the pathway nucleotide-sugar biosynthesis; UDP-N-acetyl-alpha-D-glucosamine biosynthesis; UDP-N-acetyl-alpha-D-glucosamine from N-acetyl-alpha-D-glucosamine 1-phosphate: step 1/1. Its activity is regulated as follows. GlcN-1-P acetyltransferase activity is inhibited by divalent cations. GalN-1-P acetyltransferase activity is enhanced by Co(2+), Mg(2+) and Ca(2+), but inhibited by Zn(2+) or Mn(2+). In terms of biological role, bifunctional enzyme involved in the synthesis of UDP-N-acetylglucosamine (UDP-GlcNAc) and UDP-N-acetylgalactosamine (UDP-GalNAc). It has multiple amino-sugar-1-phosphate acetyltransferase activities, including glucosamine-1-phosphate (GlcN-1-P) acetyltransferase and galactosamine-1-phosphate (GalN-1-P) acetyltransferase activities, and multiple sugar-1-phosphate nucleotidylyltransferase activities, including N-acetylglucosamine-1-phosphate (GlcNAc-1-P) uridyltransferase and N-acetylgalactosamine-1-phosphate (GalNAc-1-P) uridyltransferase activities. Also catalyzes the formation of dTDP-glucose from dTTP and glucose-1-phosphate (Glc-1-P), and the reverse reaction, which produces dTTP from dTDP-glucose and diphosphate. Can also catalyze the formation of UDP-glucose from UTP and glucose-1-phosphate. This chain is Bifunctional sugar-1-phosphate nucleotidylyltransferase/acetyltransferase, found in Sulfurisphaera tokodaii (strain DSM 16993 / JCM 10545 / NBRC 100140 / 7) (Sulfolobus tokodaii).